A 20-amino-acid polypeptide reads, in one-letter code: SDNSVVLRYGDGEYSYPVVD.

The protein belongs to the citrate synthase family. In terms of assembly, homohexamer.

The catalysed reaction is oxaloacetate + acetyl-CoA + H2O = citrate + CoA + H(+). The protein operates within carbohydrate metabolism; tricarboxylic acid cycle; isocitrate from oxaloacetate: step 1/2. With respect to regulation, allosterically inhibited by NADH. The polypeptide is Citrate synthase (gltA) (Streptomyces hygroscopicus).